The following is a 166-amino-acid chain: NAD(P)H-quinone oxidoreductase subunit I, chloroplastic (166 aa).

2 4Fe-4S ferredoxin-type domains span residues 55-84 (GRIH…VDWK) and 95-124 (LNYS…MTEE). Positions 64, 67, 70, 74, 104, 107, 110, and 114 each coordinate [4Fe-4S] cluster.

It belongs to the complex I 23 kDa subunit family. As to quaternary structure, NDH is composed of at least 16 different subunits, 5 of which are encoded in the nucleus. [4Fe-4S] cluster is required as a cofactor.

The protein localises to the plastid. The protein resides in the chloroplast thylakoid membrane. It catalyses the reaction a plastoquinone + NADH + (n+1) H(+)(in) = a plastoquinol + NAD(+) + n H(+)(out). It carries out the reaction a plastoquinone + NADPH + (n+1) H(+)(in) = a plastoquinol + NADP(+) + n H(+)(out). Its function is as follows. NDH shuttles electrons from NAD(P)H:plastoquinone, via FMN and iron-sulfur (Fe-S) centers, to quinones in the photosynthetic chain and possibly in a chloroplast respiratory chain. The immediate electron acceptor for the enzyme in this species is believed to be plastoquinone. Couples the redox reaction to proton translocation, and thus conserves the redox energy in a proton gradient. This chain is NAD(P)H-quinone oxidoreductase subunit I, chloroplastic, found in Oblivia mikanioides (Salmea mikanioides).